A 763-amino-acid polypeptide reads, in one-letter code: Endoplasmic reticulum membrane sensor NFE2L1 (763 aa).

A helical; Signal-anchor for type II membrane protein transmembrane segment spans residues 7-24 (YLTEGLLQFTILLSLIGV). The tract at residues 108–150 (DPEGSVSGSQPSSGLALESSSGLQDVTGPDNGVRESETEQGFS) is disordered. The span at 116–131 (SQPSSGLALESSSGLQ) shows a compositional bias: low complexity. The tract at residues 180-188 (IFDYSHRQK) is cholesterol recognition/amino acid consensus (CRAC) region. N-linked (GlcNAc...) asparagine glycosylation is found at asparagine 338 and asparagine 350. The interval 369–373 (SPEVE) is CPD. The N-linked (GlcNAc...) asparagine glycan is linked to asparagine 413. Disordered regions lie at residues 460–523 (EEEF…DSET) and 585–604 (TLKK…QMSR). Positions 466–470 (DSGLS) match the Destruction motif motif. Low complexity predominate over residues 466–514 (DSGLSLDSSHSPSSLSSSEGSSSSSSSSSSSSSSSASSSASSSFSEEGA). The residue at position 519 (serine 519) is a Phosphoserine; by CK2. Positions 589 to 604 (GSKEKQADFLDKQMSR) are enriched in basic and acidic residues. A Phosphoserine; by PKA modification is found at serine 590. The bZIP domain maps to 645-708 (LIRDIRRRGK…RQMKQKVQSL (64 aa)). A basic motif region spans residues 647–666 (RDIRRRGKNKMAAQNCRKRK). Residues 673–687 (LERDVEDLQRDKARL) are leucine-zipper. The short motif at 752–759 (RRQERKPK) is the Nuclear localization signal element.

It belongs to the bZIP family. CNC subfamily. Interacts with KEAP1. As to quaternary structure, interacts (via CPD region) with FBXW7; leading to its ubiquitination and degradation. Interacts with SYVN1/HRD1; leading to its ubiquitination and degradation. Interacts (when ubiquitinated) with DDI2; leading to its cleavage. In terms of assembly, interacts (via the bZIP domain) with small MAF protein (MAFF, MAFG or MAFK); required for binding to antioxidant response elements (AREs) on DNA. Interacts (via Destruction motif) with BTRC; leading to its ubiquitination and degradation. Interacts with CEBPB; the heterodimer represses expression of DSPP during odontoblast differentiation. Interacts with MOTS-c, a peptide produced by the mitochondrially encoded 12S rRNA MT-RNR1. In terms of processing, cleaved at Leu-104 by the aspartyl protease DDI2 following retrotranslocation, releasing the protein from the endoplasmic reticulum membrane and forming the transcription factor NRF1 that translocates into the nucleus. Ubiquitination is prerequisite for cleavage by aspartyl protease DDI2. Post-translationally, N-glycosylated in normal conditions, when it has a single-pass type II membrane protein topology, with the DNA-binding domain facing the endoplasmic reticulum lumen. Deglycosylated during retrotranslocation to the cytosolic side of the membrane, to have a single-pass type III membrane protein topology with the major part of the protein facing the cytosol. Ubiquitinated by the SCF(FBXW7) complex and SYVN1/HRD1, leading to its degradation by the proteasome. Ubiquitinated during retrotranslocation to the cytosolic side of the membrane: ubiquitination does not lead to degradation and is required for processing by the aspartyl protease DDI2 and subsequent release from the endoplasmic reticulum membrane. In terms of processing, phosphorylation by CK2 at Ser-519 inhibits transcription factor activity, possibly by affecting DNA-binding activity. Phosphorylation at Ser-590 is required for interaction with CEBPB. Post-translationally, ubiquitinated by the SCF(BTRC) complex in the nucleus, leading to its degradation by the proteasome.

It localises to the endoplasmic reticulum membrane. Its subcellular location is the nucleus. In terms of biological role, endoplasmic reticulum membrane sensor that translocates into the nucleus in response to various stresses to act as a transcription factor. Constitutes a precursor of the transcription factor NRF1. Able to detect various cellular stresses, such as cholesterol excess, oxidative stress or proteasome inhibition. In response to stress, it is released from the endoplasmic reticulum membrane following cleavage by the protease DDI2 and translocates into the nucleus to form the transcription factor NRF1. Acts as a key sensor of cholesterol excess: in excess cholesterol conditions, the endoplasmic reticulum membrane form of the protein directly binds cholesterol via its CRAC motif, preventing cleavage and release of the transcription factor NRF1, thereby allowing expression of genes promoting cholesterol removal, such as CD36. Involved in proteasome homeostasis: in response to proteasome inhibition, it is released from the endoplasmic reticulum membrane, translocates to the nucleus and activates expression of genes encoding proteasome subunits. Its function is as follows. CNC-type bZIP family transcription factor that translocates to the nucleus and regulates expression of target genes in response to various stresses. Heterodimerizes with small-Maf proteins (MAFF, MAFG or MAFK) and binds DNA motifs including the antioxidant response elements (AREs), which regulate expression of genes involved in oxidative stress response. Activates or represses expression of target genes, depending on the context. Plays a key role in cholesterol homeostasis by acting as a sensor of cholesterol excess: in low cholesterol conditions, translocates into the nucleus and represses expression of genes involved in defense against cholesterol excess, such as CD36. In excess cholesterol conditions, the endoplasmic reticulum membrane form of the protein directly binds cholesterol via its CRAC motif, preventing cleavage and release of the transcription factor NRF1, thereby allowing expression of genes promoting cholesterol removal. Critical for redox balance in response to oxidative stress: acts by binding the AREs motifs on promoters and mediating activation of oxidative stress response genes, such as GCLC, GCLM, GSS, MT1 and MT2. Plays an essential role during fetal liver hematopoiesis: probably has a protective function against oxidative stress and is involved in lipid homeostasis in the liver. Involved in proteasome homeostasis: in response to proteasome inhibition, mediates the 'bounce-back' of proteasome subunits by translocating into the nucleus and activating expression of genes encoding proteasome subunits. Also involved in regulating glucose flux. Together with CEBPB; represses expression of DSPP during odontoblast differentiation. In response to ascorbic acid induction, activates expression of SP7/Osterix in osteoblasts. This is Endoplasmic reticulum membrane sensor NFE2L1 from Bos taurus (Bovine).